Reading from the N-terminus, the 87-residue chain is Large ribosomal subunit protein eL31 (87 aa).

Belongs to the eukaryotic ribosomal protein eL31 family.

This chain is Large ribosomal subunit protein eL31 (rpl31e), found in Methanocaldococcus jannaschii (strain ATCC 43067 / DSM 2661 / JAL-1 / JCM 10045 / NBRC 100440) (Methanococcus jannaschii).